The following is a 334-amino-acid chain: Ornithine carbamoyltransferase (334 aa).

Carbamoyl phosphate contacts are provided by residues 57 to 60 (STRT), Gln84, Arg108, and 135 to 138 (HPTQ). L-ornithine contacts are provided by residues Asn169, Asp233, and 237–238 (SM). Carbamoyl phosphate contacts are provided by residues 275-276 (CL) and Arg320.

Belongs to the aspartate/ornithine carbamoyltransferase superfamily. OTCase family.

Its subcellular location is the cytoplasm. The enzyme catalyses carbamoyl phosphate + L-ornithine = L-citrulline + phosphate + H(+). It functions in the pathway amino-acid biosynthesis; L-arginine biosynthesis; L-arginine from L-ornithine and carbamoyl phosphate: step 1/3. Reversibly catalyzes the transfer of the carbamoyl group from carbamoyl phosphate (CP) to the N(epsilon) atom of ornithine (ORN) to produce L-citrulline. This is Ornithine carbamoyltransferase from Vibrio cholerae serotype O1 (strain ATCC 39315 / El Tor Inaba N16961).